We begin with the raw amino-acid sequence, 539 residues long: MRVNSLTPQDLKAYGINDVQDIVYNPSYDLLYQEELDPTLEGYERGVLTNLGAVAVDTGIFTGRSPKDKYIVRDDTTRDTLWWSDKGKGKNDNKPLSQETWQHLKGLVTQQLSGKRLFIVDAFCGANADTRLSVRFITEVAWQAHFVKNMFIRPADEELVDFKPDFIVMNGAKCTNPQWKEQGLNSENFVAFNLTERIQLIGGTWYGGEMKKGMFSVMNYLLPLKGIASMHCSANVGEKGDVAVFFGLSGTGKTTLSTDPKRRLIGDDEHGWDDDGVFNFEGGCYAKTIKLSKEAEPEIYNAIRRDALLENVTVREDGSIDFDDGSKTENTRVSYPIYHIDNIVKPVSKAGHATKVIFLTADAFGVLPPVSRLTADQTQYHFLSGFTAKLAGTERGVTEPTPTFSACFGAAFLSLHPTQYAEVLVKRMQASGAQAYLVNTGWNGTGKRISIKDTRAIIDAILNGSLDNAETFNLPMFDLAIPTELPGVETRILDPRNTYASPEQWQEKATALAKLFVENFEKYTDTPAGEALVSAGPKL.

R64, Y206, and K212 together coordinate substrate. ATP is bound by residues K212, H231, and G247–T255. Mn(2+) is bound by residues K212 and H231. Mn(2+) is bound at residue D268. ATP-binding positions include E296, R332, R448–I449, and T454. R332 contacts substrate.

It belongs to the phosphoenolpyruvate carboxykinase (ATP) family. Monomer. It depends on Mn(2+) as a cofactor.

It is found in the cytoplasm. It catalyses the reaction oxaloacetate + ATP = phosphoenolpyruvate + ADP + CO2. The protein operates within carbohydrate biosynthesis; gluconeogenesis. Its function is as follows. Involved in the gluconeogenesis. Catalyzes the conversion of oxaloacetate (OAA) to phosphoenolpyruvate (PEP) through direct phosphoryl transfer between the nucleoside triphosphate and OAA. This is Phosphoenolpyruvate carboxykinase (ATP) from Citrobacter koseri (strain ATCC BAA-895 / CDC 4225-83 / SGSC4696).